Here is a 198-residue protein sequence, read N- to C-terminus: ATP-dependent Clp protease proteolytic subunit (198 aa).

Catalysis depends on Ser-98, which acts as the Nucleophile. The active site involves His-123.

This sequence belongs to the peptidase S14 family. In terms of assembly, fourteen ClpP subunits assemble into 2 heptameric rings which stack back to back to give a disk-like structure with a central cavity, resembling the structure of eukaryotic proteasomes.

Its subcellular location is the cytoplasm. The enzyme catalyses Hydrolysis of proteins to small peptides in the presence of ATP and magnesium. alpha-casein is the usual test substrate. In the absence of ATP, only oligopeptides shorter than five residues are hydrolyzed (such as succinyl-Leu-Tyr-|-NHMec, and Leu-Tyr-Leu-|-Tyr-Trp, in which cleavage of the -Tyr-|-Leu- and -Tyr-|-Trp bonds also occurs).. In terms of biological role, cleaves peptides in various proteins in a process that requires ATP hydrolysis. Has a chymotrypsin-like activity. Plays a major role in the degradation of misfolded proteins. The chain is ATP-dependent Clp protease proteolytic subunit from Ehrlichia ruminantium (strain Gardel).